Reading from the N-terminus, the 344-residue chain is Meiotic recombination protein DMC1 homolog (344 aa).

The tract at residues 1 to 22 is disordered; sequence MMASLKAEETSQMQLVEREEND. Position 133-140 (133-140) interacts with ATP; sequence GEFRSGKT. A dsDNA-binding site is contributed by R235. Positions 235, 238, 241, 247, and 315 each coordinate ssDNA. The dsDNA site is built by R241 and R247.

It belongs to the RecA family. DMC1 subfamily. In terms of assembly, double stacked ring-shaped homooctamer. Interacts with BRCA2A and BRCA2B. In terms of tissue distribution, expressed in mitotic and/or meiotic tissues. Expressed in roots, leaves and anthers and carpels of young fower buds.

It is found in the nucleus. Its function is as follows. May participate in meiotic recombination, specifically in homologous strand assimilation, which is required for the resolution of meiotic double-strand breaks. Mediates interhomolog recombination during meiosis. The chain is Meiotic recombination protein DMC1 homolog from Arabidopsis thaliana (Mouse-ear cress).